The primary structure comprises 176 residues: Flavodoxin (176 aa).

One can recognise a Flavodoxin-like domain in the interval 4 to 172; the sequence is IGIFFGTDTG…RLASWLEEIK (169 aa).

Belongs to the flavodoxin family. The cofactor is FMN.

Functionally, low-potential electron donor to a number of redox enzymes. NifF is the electron donor to nitrogenase. This is Flavodoxin (nifF) from Klebsiella pneumoniae.